The following is a 397-amino-acid chain: Riboflavin biosynthesis protein RibBA (397 aa).

Positions 1 to 199 (MFHRIEEALE…IEDLIAYRRH (199 aa)) are DHBP synthase. Residues 26-27 (RE), Asp31, 138-142 (RAGHT), and Glu162 each bind D-ribulose 5-phosphate. A Mg(2+)-binding site is contributed by Glu27. His141 is a Mg(2+) binding site. Residues 200 to 397 (HETLVTREVE…VNKLGHLLNL (198 aa)) are GTP cyclohydrolase II. A GTP-binding site is contributed by 250–254 (RVHSE). Residues Cys255, Cys266, and Cys268 each coordinate Zn(2+). Residues Gln271, 293-295 (EGR), and Thr315 contribute to the GTP site. Asp327 serves as the catalytic Proton acceptor; for GTP cyclohydrolase activity. The active-site Nucleophile; for GTP cyclohydrolase activity is Arg329. 2 residues coordinate GTP: Thr350 and Lys355.

It in the N-terminal section; belongs to the DHBP synthase family. In the C-terminal section; belongs to the GTP cyclohydrolase II family. Mg(2+) is required as a cofactor. The cofactor is Mn(2+). Requires Zn(2+) as cofactor.

The catalysed reaction is D-ribulose 5-phosphate = (2S)-2-hydroxy-3-oxobutyl phosphate + formate + H(+). It catalyses the reaction GTP + 4 H2O = 2,5-diamino-6-hydroxy-4-(5-phosphoribosylamino)-pyrimidine + formate + 2 phosphate + 3 H(+). It participates in cofactor biosynthesis; riboflavin biosynthesis; 2-hydroxy-3-oxobutyl phosphate from D-ribulose 5-phosphate: step 1/1. The protein operates within cofactor biosynthesis; riboflavin biosynthesis; 5-amino-6-(D-ribitylamino)uracil from GTP: step 1/4. In terms of biological role, catalyzes the conversion of D-ribulose 5-phosphate to formate and 3,4-dihydroxy-2-butanone 4-phosphate. Its function is as follows. Catalyzes the conversion of GTP to 2,5-diamino-6-ribosylamino-4(3H)-pyrimidinone 5'-phosphate (DARP), formate and pyrophosphate. The protein is Riboflavin biosynthesis protein RibBA of Bacillus cereus (strain ATCC 10987 / NRS 248).